Consider the following 137-residue polypeptide: Proofreading thioesterase EntH (137 aa).

The active-site Nucleophile or proton acceptor is E63.

This sequence belongs to the thioesterase PaaI family. In terms of assembly, homotetramer. Dimer of dimers. Interacts specifically with the aryl carrier protein (ArCP) domain of EntB.

The protein localises to the cytoplasm. The protein operates within siderophore biosynthesis; enterobactin biosynthesis. In terms of biological role, required for optimal enterobactin synthesis. Acts as a proofreading enzyme that prevents EntB misacylation by hydrolyzing the thioester bound existing between EntB and wrongly charged molecules. The polypeptide is Proofreading thioesterase EntH (Salmonella typhimurium (strain LT2 / SGSC1412 / ATCC 700720)).